Reading from the N-terminus, the 127-residue chain is Fatty acid-binding protein, liver (127 aa).

Met1 carries the N-acetylmethionine modification. Ser11 carries the post-translational modification Phosphoserine. Residues Lys31 and Lys36 each carry the N6-succinyllysine modification. Ser39 carries the post-translational modification Phosphoserine. The residue at position 46 (Lys46) is an N6-succinyllysine. Position 51 is a phosphothreonine (Thr51). Position 56 is a phosphoserine (Ser56). N6-succinyllysine is present on residues Lys57, Lys78, and Lys90. Phosphoserine is present on Ser100. Lys121 is subject to N6-succinyllysine.

Belongs to the calycin superfamily. Fatty-acid binding protein (FABP) family. In terms of assembly, monomer.

The protein localises to the cytoplasm. Functionally, plays a role in lipoprotein-mediated cholesterol uptake in hepatocytes. Binds cholesterol. Binds free fatty acids and their coenzyme A derivatives, bilirubin, and some other small molecules in the cytoplasm. May be involved in intracellular lipid transport. This is Fatty acid-binding protein, liver (FABP1) from Sus scrofa (Pig).